The sequence spans 352 residues: Histidine biosynthesis bifunctional protein HisB (352 aa).

The tract at residues 1–163 is histidinol-phosphatase; the sequence is MKKILFIDRD…MVASAIINDA (163 aa). The Nucleophile role is filled by aspartate 8. Mg(2+) is bound by residues aspartate 8 and aspartate 10. Aspartate 10 functions as the Proton donor in the catalytic mechanism. The Zn(2+) site is built by cysteine 91, histidine 93, cysteine 99, and cysteine 101. Aspartate 128 provides a ligand contact to Mg(2+). Residues 164–352 form an imidazoleglycerol-phosphate dehydratase region; that stretch reads RKASVQRKTK…NYLPSTKGVL (189 aa).

It in the N-terminal section; belongs to the histidinol-phosphatase family. In the C-terminal section; belongs to the imidazoleglycerol-phosphate dehydratase family. It depends on Mg(2+) as a cofactor. Requires Zn(2+) as cofactor.

The protein resides in the cytoplasm. The enzyme catalyses D-erythro-1-(imidazol-4-yl)glycerol 3-phosphate = 3-(imidazol-4-yl)-2-oxopropyl phosphate + H2O. The catalysed reaction is L-histidinol phosphate + H2O = L-histidinol + phosphate. The protein operates within amino-acid biosynthesis; L-histidine biosynthesis; L-histidine from 5-phospho-alpha-D-ribose 1-diphosphate: step 6/9. Its pathway is amino-acid biosynthesis; L-histidine biosynthesis; L-histidine from 5-phospho-alpha-D-ribose 1-diphosphate: step 8/9. The protein is Histidine biosynthesis bifunctional protein HisB of Legionella pneumophila (strain Lens).